Here is a 362-residue protein sequence, read N- to C-terminus: Serine/threonine-protein phosphatase 2A activator 1 (362 aa).

Over residues methionine 1–proline 10 the composition is skewed to pro residues. Disordered regions lie at residues methionine 1–arginine 28 and asparagine 339–arginine 362. Positions valine 340–glycine 351 are enriched in basic and acidic residues.

It belongs to the PTPA-type PPIase family.

It is found in the cytoplasm. The protein localises to the nucleus. The enzyme catalyses [protein]-peptidylproline (omega=180) = [protein]-peptidylproline (omega=0). In terms of biological role, PPIases accelerate the folding of proteins. It catalyzes the cis-trans isomerization of proline imidic peptide bonds in oligopeptides. Acts as a regulatory subunit for PP2A-like phosphatases modulating their activity or substrate specificity, probably by inducing a conformational change in the catalytic subunit, a direct target of the PPIase. Can reactivate inactive phosphatase PP2A-phosphatase methylesterase complexes (PP2Ai) in presence of ATP and Mg(2+) by dissociating the inactive form from the complex. The protein is Serine/threonine-protein phosphatase 2A activator 1 (RRD1) of Cryptococcus neoformans var. neoformans serotype D (strain B-3501A) (Filobasidiella neoformans).